Reading from the N-terminus, the 274-residue chain is Acyl-coenzyme A diphosphatase YFT2 (274 aa).

Residues 1–11 (MIRQLNYWSRK) lie on the Cytoplasmic side of the membrane. The helical transmembrane segment at 12–32 (AYLIYPFQVFVGALLSIVVSS) threads the bilayer. The Lumenal segment spans residues 33–60 (ETLNHQKETCALLKSSNIFNVIFAYKAN). Residues 61–81 (QLWPFLFFSLAFLQIYFHYLA) traverse the membrane as a helical segment. At 82–124 (RMDILPLPISSTETSSSYLTYTNHWPLLKNRIISIMITQYACK) the chain is on the cytoplasmic side. A helical transmembrane segment spans residues 125–145 (FVLKYLLLFLNFQFIDHVFIW). Residues 146-170 (TGGECSSGSKTTSAEKCRLENGKWD) lie on the Lumenal side of the membrane. The chain crosses the membrane as a helical span at residues 171 to 191 (GGFDISGHFCFLVSISMILWM). The active site involves H178. Over 192–215 (ELHLFSRFVQAEDMFWVVNKWVRA) the chain is Cytoplasmic. The chain crosses the membrane as a helical span at residues 216–236 (CLAIVCAVLVIWICILWVTAI). Residues 237 to 247 (YYHTILEKVLG) are Lumenal-facing. H239 is a catalytic residue. The chain crosses the membrane as a helical span at residues 248–268 (CLMGFICPVFIYHILPKIGIL). At 269–274 (HNYLYL) the chain is on the cytoplasmic side.

It belongs to the FIT family. Yeast FIT2A/YFT2 subfamily.

It localises to the endoplasmic reticulum membrane. The protein localises to the vacuole. It carries out the reaction an acyl-CoA + H2O = an acyl-4'-phosphopantetheine + adenosine 3',5'-bisphosphate + 2 H(+). The catalysed reaction is (9Z)-octadecenoyl-CoA + H2O = S-(9Z-octadecenoyl)-4'-phosphopantetheine + adenosine 3',5'-bisphosphate + 2 H(+). It catalyses the reaction (5Z,8Z,11Z,14Z)-eicosatetraenoyl-CoA + H2O = S-(5Z,8Z,11Z,14Z-eicosatetraenoyl)-4'-phosphopantetheine + adenosine 3',5'-bisphosphate + 2 H(+). The enzyme catalyses hexadecanoyl-CoA + H2O = S-hexadecanoyl-4'-phosphopantetheine + adenosine 3',5'-bisphosphate + 2 H(+). Its function is as follows. Fatty acyl-coenzyme A (CoA) diphosphatase that hydrolyzes fatty acyl-CoA to yield acyl-4'-phosphopantetheine and adenosine 3',5'-bisphosphate. Preferentially hydrolyzes unsaturated long-chain acyl-CoA substrates in the endoplasmic reticulum (ER) lumen. This catalytic activity is required for maintaining ER structure and for lipid droplets (LDs) biogenesis, which are lipid storage organelles involved in maintaining lipid and energy homeostasis. May directly bind to diacylglycerol (DAGs) and triacylglycerol, which is also important for LD biogenesis. May support directional budding of nacent LDs from the ER into the cytosol by reducing DAG levels at sites of LD formation. May play a role in the regulation of cell morphology and cytoskeletal organization. Involved in phospholipid biosynthesis. In Saccharomyces cerevisiae (strain ATCC 204508 / S288c) (Baker's yeast), this protein is Acyl-coenzyme A diphosphatase YFT2.